We begin with the raw amino-acid sequence, 345 residues long: Phosphoribosylformylglycinamidine cyclo-ligase (345 aa).

Belongs to the AIR synthase family.

Its subcellular location is the cytoplasm. The enzyme catalyses 2-formamido-N(1)-(5-O-phospho-beta-D-ribosyl)acetamidine + ATP = 5-amino-1-(5-phospho-beta-D-ribosyl)imidazole + ADP + phosphate + H(+). Its pathway is purine metabolism; IMP biosynthesis via de novo pathway; 5-amino-1-(5-phospho-D-ribosyl)imidazole from N(2)-formyl-N(1)-(5-phospho-D-ribosyl)glycinamide: step 2/2. This is Phosphoribosylformylglycinamidine cyclo-ligase from Escherichia coli (strain 55989 / EAEC).